The following is a 489-amino-acid chain: Bridging integrator 2 (489 aa).

A BAR domain is found at 28–244 (VLQKLGKTVE…MSKLEKQHSN (217 aa)). The segment covering 267–302 (QSCAASSPVSPVSPVSPVTSPTSPSATSEPESVSAT) has biased composition (low complexity). Residues 267–489 (QSCAASSPVS…ASGGLVGLFL (223 aa)) are disordered. S273 carries the post-translational modification Phosphoserine. Residues 311 to 331 (GGEDSCESQESLKDEEADEAQ) are compositionally biased toward acidic residues. At S357 the chain carries Phosphoserine. A compositionally biased stretch (low complexity) spans 358 to 368 (QEEALSSSAQS). Phosphoserine is present on residues S380, S392, S420, S422, S424, S430, S435, S439, and S443.

In terms of assembly, homodimer. Interacts with BIN1. Interacts with ARHGEF6 (via SH3 domain), ARHGEF7 (via SH3 domain), SH3GL1, SH3GL2 and SH3GL3. Identified in a complex with ARHGEF6 and GIT2.

It is found in the cytoplasm. Its subcellular location is the cell projection. It localises to the podosome membrane. The protein localises to the cell cortex. The protein resides in the phagocytic cup. Its function is as follows. Promotes cell motility and migration, probably via its interaction with the cell membrane and with podosome proteins that mediate interaction with the cytoskeleton. Modulates membrane curvature and mediates membrane tubulation. Inhibits phagocytosis. Plays a role in podosome formation. The sequence is that of Bridging integrator 2 (Bin2) from Mus musculus (Mouse).